Here is a 355-residue protein sequence, read N- to C-terminus: MNANIFSAPIFKKPTGTHLLILLTGLLFLLVVFFQSTNSLLIPLMATTLISAGLGCQVVPMLRRLKMGQIMREDGPQAHLKKAGTPTMGGSFFVPVALIFALIWSKFTPNVVAVALLTFVYMGIGWLDDWQILRYKSNKGLSPQMKLILQITGAVLFCLWMLVNQVSTDITLWGRLVIPLGFFFWILAGFVLVAESNATNLTDGVDGLAGGTGAIAFLGLGIIIAPSHPDLAIFCTCFAGACLGFIFHNRNPAKVFMGDTGSLALGGALAAVGLIAGHLWGLFLISGLFFLESLSVIAQVIYYKATKGPDGKGKRLLKMAPFHHHLELSGWTETKIVGAFYLVNALLVVLAIWSS.

The next 10 helical transmembrane spans lie at 14–34, 40–60, 84–104, 107–127, 147–167, 176–196, 205–225, 227–247, 268–290, and 334–354; these read PTGTHLLILLTGLLFLLVVFF, LLIPLMATTLISAGLGCQVVP, GTPTMGGSFFVPVALIFALIW, FTPNVVAVALLTFVYMGIGWL, LILQITGAVLFCLWMLVNQVS, LVIPLGFFFWILAGFVLVAES, VDGLAGGTGAIAFLGLGIIIA, SHPDLAIFCTCFAGACLGFIF, ALAAVGLIAGHLWGLFLISGLFF, and TKIVGAFYLVNALLVVLAIWS.

It belongs to the glycosyltransferase 4 family. MraY subfamily. Requires Mg(2+) as cofactor.

The protein resides in the cell inner membrane. The catalysed reaction is UDP-N-acetyl-alpha-D-muramoyl-L-alanyl-gamma-D-glutamyl-meso-2,6-diaminopimeloyl-D-alanyl-D-alanine + di-trans,octa-cis-undecaprenyl phosphate = di-trans,octa-cis-undecaprenyl diphospho-N-acetyl-alpha-D-muramoyl-L-alanyl-D-glutamyl-meso-2,6-diaminopimeloyl-D-alanyl-D-alanine + UMP. It participates in cell wall biogenesis; peptidoglycan biosynthesis. In terms of biological role, catalyzes the initial step of the lipid cycle reactions in the biosynthesis of the cell wall peptidoglycan: transfers peptidoglycan precursor phospho-MurNAc-pentapeptide from UDP-MurNAc-pentapeptide onto the lipid carrier undecaprenyl phosphate, yielding undecaprenyl-pyrophosphoryl-MurNAc-pentapeptide, known as lipid I. This is Phospho-N-acetylmuramoyl-pentapeptide-transferase from Microcystis aeruginosa (strain NIES-843 / IAM M-2473).